The chain runs to 233 residues: ATP synthase subunit a, chloroplastic (233 aa).

Transmembrane regions (helical) follow at residues 82-102, 121-141, 177-199, and 211-231; these read VPFI…GALI, INTT…AGIS, LFGN…PLIV, and SSIQ…EAIE.

It belongs to the ATPase A chain family. As to quaternary structure, F-type ATPases have 2 components, CF(1) - the catalytic core - and CF(0) - the membrane proton channel. CF(1) has five subunits: alpha(3), beta(3), gamma(1), delta(1), epsilon(1). CF(0) has four main subunits: a, b, b' and c.

Its subcellular location is the plastid. The protein resides in the chloroplast thylakoid membrane. In terms of biological role, key component of the proton channel; it plays a direct role in the translocation of protons across the membrane. This is ATP synthase subunit a, chloroplastic from Galdieria sulphuraria (Red alga).